The following is a 92-amino-acid chain: Turripeptide UID-02 (92 aa).

The N-terminal stretch at 1–21 is a signal peptide; that stretch reads MGFYMLLTVALLLTSLMNVEA. A propeptide spanning residues 22–39 is cleaved from the precursor; sequence TPVDQAERSALEKSGLGN.

In terms of tissue distribution, expressed by the venom duct.

It is found in the secreted. This is Turripeptide UID-02 from Gemmula speciosa (Splendid gem-turris).